A 332-amino-acid chain; its full sequence is DNA-directed RNA polymerase subunit alpha (332 aa).

Residues 1 to 231 (MQTNLLKPKT…EQLAVFAQLD (231 aa)) are alpha N-terminal domain (alpha-NTD). The interval 252–332 (FDPILLRPVD…NWPPAGLEKR (81 aa)) is alpha C-terminal domain (alpha-CTD).

Belongs to the RNA polymerase alpha chain family. As to quaternary structure, homodimer. The RNAP catalytic core consists of 2 alpha, 1 beta, 1 beta' and 1 omega subunit. When a sigma factor is associated with the core the holoenzyme is formed, which can initiate transcription.

The catalysed reaction is RNA(n) + a ribonucleoside 5'-triphosphate = RNA(n+1) + diphosphate. Functionally, DNA-dependent RNA polymerase catalyzes the transcription of DNA into RNA using the four ribonucleoside triphosphates as substrates. The sequence is that of DNA-directed RNA polymerase subunit alpha from Delftia acidovorans (strain DSM 14801 / SPH-1).